The sequence spans 157 residues: Succinate dehydrogenase assembly factor 2-B, mitochondrial (157 aa).

A mitochondrion-targeting transit peptide spans 1-24 (MLRQFLFSTASRRLVRPMIAPHRS).

The protein belongs to the SDHAF2 family. Interacts with the flavoprotein subunit within the SDH catalytic dimer.

The protein resides in the mitochondrion matrix. Its function is as follows. Plays an essential role in the assembly of succinate dehydrogenase (SDH), an enzyme complex (also referred to as respiratory complex II) that is a component of both the tricarboxylic acid (TCA) cycle and the mitochondrial electron transport chain, and which couples the oxidation of succinate to fumarate with the reduction of ubiquinone (coenzyme Q) to ubiquinol. Required for flavinylation (covalent attachment of FAD) of the flavoprotein subunit of the SDH catalytic dimer. The chain is Succinate dehydrogenase assembly factor 2-B, mitochondrial from Drosophila persimilis (Fruit fly).